Consider the following 860-residue polypeptide: MADDGLGDVPMETESMPQYTISHVIEAHKSDTKALAVTQGGCLISGGRDETVKFWAKKGKQYTKTHAFEQPKGITVNSIAYAELADGWRLFVGRRDGTIAVFGPSQAEPYAIFNEHKQNVCCLHINEKATHMLSGSWDSNVIIWPITELNSSSFTFQTIVCPGHTLSVWALASFPDLPNTYLSASADKTIRMWFGDTTLSVFKGHTDVVRALVVLSSSHFLSAGNDGHIIHWDVASASILRKFATQAHEFIYSMTLSDSHILTTGEDGTLEFWAIDGGKDGNLAIVSEAVIQLPTTNTWDAKVLLNSDIAVAGSDGRIYIMTTDKNRKADDDILDAFDAEVVAKLTAKTERMKQEEHETVTIKVDIDDRPTQLNLKYKKGTDPGLCAQEFLSENNLPIHYLEEITRFIKDRIPEARAFDLKSGKKVIVDGKEYDYALGVNFGKGEPDKQMPFNVNESPQFAAQRFVERHQLPVSVIPSLAGMISQEMDKLSKGAASAQSGYEDPFTGPGRYVPQGSSNSGGHGADPFTGSGRYVPQASNSSGFDTGFSGDPLTGDGGYRASAPENTGSHAVPLSSLPQNKKKPRGPLVPVPDFYIIGLAGKGEKAIAKLKELNEKQDAFQLNPDQINGLEELFVLPTSSNYSSEVTQSAFEMSLQWPVEHLTPVLDFLRIALTHHSLNSYFCDRERGQELVGRLIAILVSDPADVALKVLVCRCIANAFSHPVGRNLFASTELSTLAPLVVRQVLNEKTVLQMSAATALANWSLALLQQSEQCEQLGPKEDLLRAILNGIESVDSFGYLGEDAIIRLLQALVTVMWGDASVIRLAKNRNIAQIAARLKDAVSNDSGKNIARDIVEMTYAV.

WD repeat units follow at residues 27-65, 71-112, 115-154, 163-203, 204-242, and 244-283; these read AHKS…YTKT, PKGI…PYAI, EHKQ…SSSF, GHTL…SVFK, GHTD…ILRK, and ATQA…DGNL. One can recognise a PFU domain in the interval 397 to 497; sequence PIHYLEEITR…DKLSKGAASA (101 aa). Residues 494–585 are disordered; sequence AASAQSGYED…LPQNKKKPRG (92 aa). Residues 586–856 form the PUL domain; the sequence is PLVPVPDFYI…KNIARDIVEM (271 aa).

This sequence belongs to the WD repeat PLAP family. In terms of assembly, interacts with cdc-48.1. In terms of tissue distribution, expressed in intestine (at protein level).

Its subcellular location is the cytoplasm. Plays a role in protein ubiquitination, sorting and degradation through its association with cdc-48.1 and/or cdc-48.2. The sequence is that of Ubiquitin fusion degradation protein 3 homolog from Caenorhabditis elegans.